Consider the following 326-residue polypeptide: Glyoxylate/hydroxypyruvate reductase B (326 aa).

Residues arginine 237 and glutamate 266 contribute to the active site. Histidine 285 (proton donor) is an active-site residue.

This sequence belongs to the D-isomer specific 2-hydroxyacid dehydrogenase family. GhrB subfamily. As to quaternary structure, homodimer.

Its subcellular location is the cytoplasm. The catalysed reaction is glycolate + NADP(+) = glyoxylate + NADPH + H(+). It catalyses the reaction (R)-glycerate + NAD(+) = 3-hydroxypyruvate + NADH + H(+). The enzyme catalyses (R)-glycerate + NADP(+) = 3-hydroxypyruvate + NADPH + H(+). In terms of biological role, catalyzes the NADPH-dependent reduction of glyoxylate and hydroxypyruvate into glycolate and glycerate, respectively. This Yersinia enterocolitica serotype O:8 / biotype 1B (strain NCTC 13174 / 8081) protein is Glyoxylate/hydroxypyruvate reductase B.